Reading from the N-terminus, the 345-residue chain is Phosphoribosylformylglycinamidine cyclo-ligase (345 aa).

It belongs to the AIR synthase family.

The protein resides in the cytoplasm. The enzyme catalyses 2-formamido-N(1)-(5-O-phospho-beta-D-ribosyl)acetamidine + ATP = 5-amino-1-(5-phospho-beta-D-ribosyl)imidazole + ADP + phosphate + H(+). The protein operates within purine metabolism; IMP biosynthesis via de novo pathway; 5-amino-1-(5-phospho-D-ribosyl)imidazole from N(2)-formyl-N(1)-(5-phospho-D-ribosyl)glycinamide: step 2/2. The protein is Phosphoribosylformylglycinamidine cyclo-ligase of Escherichia fergusonii (strain ATCC 35469 / DSM 13698 / CCUG 18766 / IAM 14443 / JCM 21226 / LMG 7866 / NBRC 102419 / NCTC 12128 / CDC 0568-73).